The following is a 310-amino-acid chain: Phosphoribosylaminoimidazole-succinocarboxamide synthase (310 aa).

This sequence belongs to the SAICAR synthetase family.

It catalyses the reaction 5-amino-1-(5-phospho-D-ribosyl)imidazole-4-carboxylate + L-aspartate + ATP = (2S)-2-[5-amino-1-(5-phospho-beta-D-ribosyl)imidazole-4-carboxamido]succinate + ADP + phosphate + 2 H(+). The protein operates within purine metabolism; IMP biosynthesis via de novo pathway; 5-amino-1-(5-phospho-D-ribosyl)imidazole-4-carboxamide from 5-amino-1-(5-phospho-D-ribosyl)imidazole-4-carboxylate: step 1/2. This chain is Phosphoribosylaminoimidazole-succinocarboxamide synthase, found in Cytophaga hutchinsonii (strain ATCC 33406 / DSM 1761 / CIP 103989 / NBRC 15051 / NCIMB 9469 / D465).